The following is a 1086-amino-acid chain: DNA polymerase (1086 aa).

Residues Ser-638–Thr-657 form a disordered region.

It belongs to the DNA polymerase type-B family.

The catalysed reaction is DNA(n) + a 2'-deoxyribonucleoside 5'-triphosphate = DNA(n+1) + diphosphate. Functionally, replicates the viral genome. Host DNA polymerases cannot substitute for the viral enzyme in this process. This chain is DNA polymerase, found in Noctuidae (owlet moths).